A 417-amino-acid chain; its full sequence is Serine hydroxymethyltransferase (417 aa).

(6S)-5,6,7,8-tetrahydrofolate is bound by residues Leu-116 and 120–122 (GHL). At Lys-225 the chain carries N6-(pyridoxal phosphate)lysine. 350 to 352 (SPF) provides a ligand contact to (6S)-5,6,7,8-tetrahydrofolate.

Belongs to the SHMT family. In terms of assembly, homodimer. Pyridoxal 5'-phosphate is required as a cofactor.

Its subcellular location is the cytoplasm. It carries out the reaction (6R)-5,10-methylene-5,6,7,8-tetrahydrofolate + glycine + H2O = (6S)-5,6,7,8-tetrahydrofolate + L-serine. The protein operates within one-carbon metabolism; tetrahydrofolate interconversion. It participates in amino-acid biosynthesis; glycine biosynthesis; glycine from L-serine: step 1/1. Catalyzes the reversible interconversion of serine and glycine with tetrahydrofolate (THF) serving as the one-carbon carrier. This reaction serves as the major source of one-carbon groups required for the biosynthesis of purines, thymidylate, methionine, and other important biomolecules. Also exhibits THF-independent aldolase activity toward beta-hydroxyamino acids, producing glycine and aldehydes, via a retro-aldol mechanism. The chain is Serine hydroxymethyltransferase from Ligilactobacillus salivarius (strain UCC118) (Lactobacillus salivarius).